The sequence spans 474 residues: Tubulin gamma-1 chain (474 aa).

Residue A142–G148 coordinates GTP.

The protein belongs to the tubulin family. In terms of assembly, gamma-tubulin complex is composed of gamma-tubulin and GCP proteins.

The protein resides in the cytoplasm. The protein localises to the cytoskeleton. It is found in the microtubule organizing center. It localises to the nucleus. Its subcellular location is the cell cortex. Its function is as follows. Tubulin is the major constituent of microtubules. The gamma chain is found at microtubule organizing centers (MTOC) such as the spindle poles, suggesting that it is involved in the minus-end nucleation of microtubule assembly. In terms of biological role, gamma-tubulin complex is essential for the control of microtubular network remodeling in the course of initiation and development of giant-feeding cells, and for the successful reproduction of nematodes (e.g. Meloidogyne spp.) in their plant hosts. The sequence is that of Tubulin gamma-1 chain (TUBG1) from Arabidopsis thaliana (Mouse-ear cress).